Here is a 292-residue protein sequence, read N- to C-terminus: Small ribosomal subunit protein uS2 (292 aa).

The tract at residues 265–292 is disordered; sequence TETALDWSDEPVAGDWAAEPAADAQGGW. Over residues 277 to 292 the composition is skewed to low complexity; it reads AGDWAAEPAADAQGGW.

This sequence belongs to the universal ribosomal protein uS2 family. As to quaternary structure, component of the small ribosomal subunit. Mature ribosomes consist of a small (40S) and a large (60S) subunit. The 40S subunit contains about 33 different proteins and 1 molecule of RNA (18S). The 60S subunit contains about 49 different proteins and 3 molecules of RNA (25S, 5.8S and 5S). Interacts with RPS21.

It is found in the cytoplasm. Required for the assembly and/or stability of the 40S ribosomal subunit. Required for the processing of the 20S rRNA-precursor to mature 18S rRNA in a late step of the maturation of 40S ribosomal subunits. The protein is Small ribosomal subunit protein uS2 of Cryptococcus neoformans var. neoformans serotype D (strain B-3501A) (Filobasidiella neoformans).